A 1889-amino-acid polypeptide reads, in one-letter code: E3 ubiquitin-protein ligase UBR3 (1889 aa).

The disordered stretch occupies residues 1 to 27 (MAAAAAAAAVGDPQPPQPEAPAQGLAL). The segment at 118–189 (ALCGLVWTAN…ESGFCRRHQI (72 aa)) adopts a UBR-type zinc-finger fold. The interval 338–362 (LGQIDSSDEEDQDGSQGLGKRKRVK) is disordered. 2 positions are modified to phosphoserine: serine 343 and serine 344. 2 helical membrane passes run 761–781 (MLEG…HLGM) and 919–939 (LLHC…ILMD). The stretch at 1167-1199 (KKITAAEKKTLDKEERRQKARERQQKLLAEFAS) forms a coiled coil. Phosphoserine is present on serine 1199. An RING-type; degenerate zinc finger spans residues 1306–1364 (DSSCLLAVSIGWEGGVYVQTCGHTLHIDCHKSYMESLRNDQVLQGFSVDKGEFTCPLCR). A helical membrane pass occupies residues 1807 to 1827 (QNCGAGTGIFLLINASVIIII).

Belongs to the E3 ubiquitin-protein ligase UBR1-like family. Interacts with UBE2A and UBE2B. As to expression, expressed in numerous cells of the smell, touch, vision, hearing and taste senses. Expressed in cells of the olfactory pathway, including the olfactory cell layer of the main olfactory epithelium (MOE), a mitral neuron cell layer of the olfactory bulb (OB), and a pyramidal cell layer of the piriform cortex of the olfactory cortex (OC). Expressed in the vomeronasal sensory epithelium of the vomeronasal organ (VNO) and the mitral cells of the accessory olfactory bulb. Expressed in tactile tissues, including the dorsal root ganglion, trigeminal ganglion and follicle-sinus complexes. Expressed in cells between hair follicle and sinus and also in the region of the rete ridge collar. Expressed in taste buds of the fungiform, circumvallate, and foliate papillae. Expressed in the spiral ganglion, the organ of Corti of the cochlea in the inner ear, in the sensory epithelium of macula and vestibular ganglion of the balancing system (at protein level). Expressed in the liver and skeletal muscle.

Its subcellular location is the membrane. It catalyses the reaction S-ubiquitinyl-[E2 ubiquitin-conjugating enzyme]-L-cysteine + [acceptor protein]-L-lysine = [E2 ubiquitin-conjugating enzyme]-L-cysteine + N(6)-ubiquitinyl-[acceptor protein]-L-lysine.. Its pathway is protein modification; protein ubiquitination. E3 ubiquitin-protein ligase which is a component of the N-end rule pathway. Does not bind to proteins bearing specific N-terminal residues that are destabilizing according to the N-end rule, leading to their ubiquitination and subsequent degradation. May play a role in Shh signaling by mediating the ubiquitination of Kif7. May be important for MYH9 function in certain tissues, possibly by regulating the ubiquitination of MYH9 and consequently affecting its interaction with MYO7A. The chain is E3 ubiquitin-protein ligase UBR3 (Ubr3) from Mus musculus (Mouse).